The following is a 698-amino-acid chain: Na(+)/H(+) antiporter NhaS5 (698 aa).

12 helical membrane passes run 10 to 30, 35 to 55, 65 to 85, 100 to 120, 121 to 141, 156 to 176, 184 to 204, 222 to 242, 275 to 295, 300 to 320, 333 to 353, and 370 to 390; these read SNPL…PPIF, LPGL…GLGV, LFTD…IDMV, LTFA…GYSF, NASV…YPIV, IGAT…CISI, AGLV…LIGF, QFLF…LINV, LFIP…AFLV, LFPL…VAAI, GLTM…AAVA, and VLNT…LMTA.

The protein belongs to the monovalent cation:proton antiporter 2 (CPA2) transporter (TC 2.A.37) family.

It localises to the membrane. Na(+)/H(+) antiporter. In Synechocystis sp. (strain ATCC 27184 / PCC 6803 / Kazusa), this protein is Na(+)/H(+) antiporter NhaS5 (nhaS5).